A 272-amino-acid chain; its full sequence is Tryptophan synthase alpha chain (272 aa).

Catalysis depends on proton acceptor residues Glu-49 and Glu-60.

This sequence belongs to the TrpA family. Tetramer of two alpha and two beta chains.

The enzyme catalyses (1S,2R)-1-C-(indol-3-yl)glycerol 3-phosphate + L-serine = D-glyceraldehyde 3-phosphate + L-tryptophan + H2O. It functions in the pathway amino-acid biosynthesis; L-tryptophan biosynthesis; L-tryptophan from chorismate: step 5/5. In terms of biological role, the alpha subunit is responsible for the aldol cleavage of indoleglycerol phosphate to indole and glyceraldehyde 3-phosphate. This Legionella pneumophila (strain Corby) protein is Tryptophan synthase alpha chain.